The following is a 240-amino-acid chain: UDP-2,3-diacylglucosamine hydrolase (240 aa).

Residues Asp-8, His-10, Asp-41, Asn-79, and His-114 each coordinate Mn(2+). 79–80 (NR) is a substrate binding site. 5 residues coordinate substrate: Asp-122, Ser-160, Asn-164, Lys-167, and His-195. Residues His-195 and His-197 each coordinate Mn(2+).

It belongs to the LpxH family. Requires Mn(2+) as cofactor.

It localises to the cell inner membrane. The catalysed reaction is UDP-2-N,3-O-bis[(3R)-3-hydroxytetradecanoyl]-alpha-D-glucosamine + H2O = 2-N,3-O-bis[(3R)-3-hydroxytetradecanoyl]-alpha-D-glucosaminyl 1-phosphate + UMP + 2 H(+). The protein operates within glycolipid biosynthesis; lipid IV(A) biosynthesis; lipid IV(A) from (3R)-3-hydroxytetradecanoyl-[acyl-carrier-protein] and UDP-N-acetyl-alpha-D-glucosamine: step 4/6. In terms of biological role, hydrolyzes the pyrophosphate bond of UDP-2,3-diacylglucosamine to yield 2,3-diacylglucosamine 1-phosphate (lipid X) and UMP by catalyzing the attack of water at the alpha-P atom. Involved in the biosynthesis of lipid A, a phosphorylated glycolipid that anchors the lipopolysaccharide to the outer membrane of the cell. The protein is UDP-2,3-diacylglucosamine hydrolase of Enterobacter sp. (strain 638).